Reading from the N-terminus, the 416-residue chain is Imidazolonepropionase (416 aa).

2 residues coordinate Fe(3+): His82 and His84. Positions 82 and 84 each coordinate Zn(2+). The 4-imidazolone-5-propanoate site is built by Arg91, Tyr154, and His187. Residue Tyr154 coordinates N-formimidoyl-L-glutamate. His252 provides a ligand contact to Fe(3+). His252 provides a ligand contact to Zn(2+). Glu255 provides a ligand contact to 4-imidazolone-5-propanoate. Asp326 is a Fe(3+) binding site. Asp326 contacts Zn(2+). Positions 328 and 330 each coordinate N-formimidoyl-L-glutamate. Ser331 is a binding site for 4-imidazolone-5-propanoate.

The protein belongs to the metallo-dependent hydrolases superfamily. HutI family. Zn(2+) serves as cofactor. It depends on Fe(3+) as a cofactor.

The protein localises to the cytoplasm. The enzyme catalyses 4-imidazolone-5-propanoate + H2O = N-formimidoyl-L-glutamate. It participates in amino-acid degradation; L-histidine degradation into L-glutamate; N-formimidoyl-L-glutamate from L-histidine: step 3/3. In terms of biological role, catalyzes the hydrolytic cleavage of the carbon-nitrogen bond in imidazolone-5-propanoate to yield N-formimidoyl-L-glutamate. It is the third step in the universal histidine degradation pathway. The sequence is that of Imidazolonepropionase from Parabacteroides distasonis (strain ATCC 8503 / DSM 20701 / CIP 104284 / JCM 5825 / NCTC 11152).